A 259-amino-acid polypeptide reads, in one-letter code: Triosephosphate isomerase (259 aa).

10–12 (NWK) provides a ligand contact to substrate. The active-site Electrophile is H102. E174 functions as the Proton acceptor in the catalytic mechanism. Substrate contacts are provided by residues G180, S220, and 241–242 (GG).

This sequence belongs to the triosephosphate isomerase family. Homodimer.

The protein resides in the cytoplasm. It catalyses the reaction D-glyceraldehyde 3-phosphate = dihydroxyacetone phosphate. The protein operates within carbohydrate biosynthesis; gluconeogenesis. It participates in carbohydrate degradation; glycolysis; D-glyceraldehyde 3-phosphate from glycerone phosphate: step 1/1. In terms of biological role, involved in the gluconeogenesis. Catalyzes stereospecifically the conversion of dihydroxyacetone phosphate (DHAP) to D-glyceraldehyde-3-phosphate (G3P). This chain is Triosephosphate isomerase, found in Cutibacterium acnes (strain DSM 16379 / KPA171202) (Propionibacterium acnes).